A 139-amino-acid chain; its full sequence is Large ribosomal subunit protein uL16 (139 aa).

The segment covering 1-17 has biased composition (basic residues); the sequence is MLIPRRTKHRKQHHPRR. The segment at 1 to 24 is disordered; that stretch reads MLIPRRTKHRKQHHPRRTGAASGG.

This sequence belongs to the universal ribosomal protein uL16 family. Part of the 50S ribosomal subunit.

In terms of biological role, binds 23S rRNA and is also seen to make contacts with the A and possibly P site tRNAs. This chain is Large ribosomal subunit protein uL16, found in Beutenbergia cavernae (strain ATCC BAA-8 / DSM 12333 / CCUG 43141 / JCM 11478 / NBRC 16432 / NCIMB 13614 / HKI 0122).